Consider the following 259-residue polypeptide: Adenylate kinase (259 aa).

Residue 52–57 coordinates ATP; the sequence is GAGKGT. An NMP region spans residues 72–101; the sequence is ATGDMLRSQVAKKTDLGREAKKIMDQGGLV. AMP is bound by residues threonine 73, arginine 78, 99–101, 128–131, and glutamine 135; these read GLV and GFPR. The LID stretch occupies residues 169–206; it reads GRLVHPASGRSYHKIFNPPKEAMKDDITGEPLVQRSDD. ATP-binding positions include arginine 170 and 179-180; that span reads SY. AMP-binding residues include arginine 203 and arginine 214. Residue glutamine 242 participates in ATP binding.

This sequence belongs to the adenylate kinase family. AK2 subfamily. In terms of assembly, monomer.

It localises to the cytoplasm. Its subcellular location is the mitochondrion intermembrane space. The catalysed reaction is AMP + ATP = 2 ADP. Functionally, catalyzes the reversible transfer of the terminal phosphate group between ATP and AMP. Plays an important role in cellular energy homeostasis and in adenine nucleotide metabolism. Adenylate kinase activity is critical for regulation of the phosphate utilization and the AMP de novo biosynthesis pathways. This Emericella nidulans (strain FGSC A4 / ATCC 38163 / CBS 112.46 / NRRL 194 / M139) (Aspergillus nidulans) protein is Adenylate kinase (adk1).